A 255-amino-acid polypeptide reads, in one-letter code: NAD kinase (255 aa).

Catalysis depends on Asp-44, which acts as the Proton acceptor. Residues 44–45 (DG), His-49, 114–115 (NE), Asp-144, Ala-152, 155–160 (SAYNLS), and Gln-216 contribute to the NAD(+) site.

Belongs to the NAD kinase family. Requires a divalent metal cation as cofactor.

The protein resides in the cytoplasm. The enzyme catalyses NAD(+) + ATP = ADP + NADP(+) + H(+). Functionally, involved in the regulation of the intracellular balance of NAD and NADP, and is a key enzyme in the biosynthesis of NADP. Catalyzes specifically the phosphorylation on 2'-hydroxyl of the adenosine moiety of NAD to yield NADP. The protein is NAD kinase of Rickettsia rickettsii (strain Iowa).